Consider the following 218-residue polypeptide: Ribose-5-phosphate isomerase A (218 aa).

Substrate-binding positions include 28–31, 81–84, and 94–97; these read TGST, DGAD, and KGGG. The active-site Proton acceptor is the Glu103. A substrate-binding site is contributed by Lys121.

The protein belongs to the ribose 5-phosphate isomerase family. As to quaternary structure, homodimer.

The enzyme catalyses aldehydo-D-ribose 5-phosphate = D-ribulose 5-phosphate. It functions in the pathway carbohydrate degradation; pentose phosphate pathway; D-ribose 5-phosphate from D-ribulose 5-phosphate (non-oxidative stage): step 1/1. Catalyzes the reversible conversion of ribose-5-phosphate to ribulose 5-phosphate. This is Ribose-5-phosphate isomerase A from Colwellia psychrerythraea (strain 34H / ATCC BAA-681) (Vibrio psychroerythus).